Reading from the N-terminus, the 219-residue chain is Leukocyte surface antigen CD53 (219 aa).

Residues 2 to 11 (GMSSLKLLKY) are Cytoplasmic-facing. The helical transmembrane segment at 12 to 32 (VLFFFNFLFWVCGCCILGFGI) threads the bilayer. Over 33 to 54 (HLLVQNTYGILFRNLPFLTLGN) the chain is Extracellular. The chain crosses the membrane as a helical span at residues 55-69 (VLVIVGSIIMVVAFL). The Cytoplasmic portion of the chain corresponds to 70-80 (GCMGSIKENKC). Residues 81 to 106 (LLMSFFVLLLLILLAEVTLAILLFVY) form a helical membrane-spanning segment. At 107-181 (EKKINTLVAE…KKGQAWFHSN (75 aa)) the chain is on the extracellular side. N-linked (GlcNAc...) asparagine glycosylation is found at Asn119, Asn129, and Asn148. The chain crosses the membrane as a helical span at residues 182 to 206 (FLYIGIVTICVCVIQVLGMSFALTL). Over 207 to 219 (NCQIDKTSQALGL) the chain is Cytoplasmic.

The protein belongs to the tetraspanin (TM4SF) family. In terms of assembly, interacts with SCIMP. Interacts with CD45/PTPRC. Interacts with IL7R. Interacts with RBL2 and PPP2CA. Spleen and thymus, B-cells, monocytes, macrophages, neutrophils, single (CD4 or CD8) positive thymocytes, peripheral T-cells.

It is found in the cell membrane. The protein resides in the cell junction. It localises to the membrane. Functionally, required for efficient formation of myofibers in regenerating muscle at the level of cell fusion. May be involved in growth regulation in hematopoietic cells. The protein is Leukocyte surface antigen CD53 (Cd53) of Rattus norvegicus (Rat).